The primary structure comprises 625 residues: Prothrombin (625 aa).

The N-terminal stretch at 1–24 is a signal peptide; that stretch reads MARVRGPRLPGCLALAALFSLVHS. The propeptide occupies 25-43; it reads QHVFLAHQQASSLLQRARR. One can recognise a Gla domain in the interval 44–90; the sequence is ANKGFLEEVRKGNLERECLEEPCSREEAFEALESLSATDAFWAKYTA. 4-carboxyglutamate is present on residues Glu50, Glu51, Glu58, Glu60, Glu63, Glu64, Glu69, Glu70, Glu73, and Glu76. A disulfide bridge links Cys61 with Cys66. Cystine bridges form between Cys91–Cys104, Cys109–Cys187, Cys130–Cys170, Cys158–Cys182, Cys214–Cys292, Cys235–Cys275, Cys263–Cys287, Cys339–Cys485, Cys394–Cys410, Cys539–Cys553, and Cys567–Cys597. Kringle domains lie at 109–187 and 214–292; these read CAEG…VPVC and CVPD…LNYC. N-linked (GlcNAc...) asparagine glycans are attached at residues Asn120 and Asn144. Residues 367-621 enclose the Peptidase S1 domain; sequence IVEGQDAEVG…LKKWIQKVID (255 aa). His409 (charge relay system) is an active-site residue. Asn419 carries N-linked (GlcNAc...) asparagine glycosylation. Residue Asp465 is the Charge relay system of the active site. A high affinity receptor-binding region which is also known as the TP508 peptide region spans residues 554-576; that stretch reads AGYKPGEGKRGDACEGDSGGPFV. The active-site Charge relay system is the Ser571.

The protein belongs to the peptidase S1 family. In terms of assembly, heterodimer (named alpha-thrombin) of a light and a heavy chain; disulfide-linked. Forms a heterodimer with SERPINA5. In plasma, interacts (via N-terminus) with alpha-1-microglobulin; this interaction does not prevent the activation of prothrombin to thrombin. In terms of processing, the gamma-carboxyglutamyl residues, which bind calcium ions, result from the carboxylation of glutamyl residues by a microsomal enzyme, the vitamin K-dependent carboxylase. The modified residues are necessary for the calcium-dependent interaction with a negatively charged phospholipid surface, which is essential for the conversion of prothrombin to thrombin. In the penultimate step of the coagulation cascade, prothrombin is converted to thrombin by the prothrombinase complex composed of factor Xa (F10), cofactor Va (F5), and phospholipids. This activation requires factor Xa-catalyzed sequential cleavage at 2 sites, Arg-317 and Arg-366, along 2 possible pathways. In the first pathway, the first cleavage occurs at Arg-317, leading to the formation of the inactive intermediate prethrombin-2. This pathway preferentially occurs on platelets and in the absence of cofactor Va. In the second pathway, the first cleavage occurs at Arg-366, which separates protease domain into 2 chains that remain connected through a disulfide bond and generates the active intermediate meizothrombin. The presence of cofactor Va directs activation along the meizothrombin pathway and greatly accelerates the rate of cleavage at Arg-366, but has a smaller effect on the cleavage of meizothrombin at Arg-317. Meizothrombin accumulates as an intermediate when prothrombinase is assembled on the membrane of red blood cells. Expressed by the liver and secreted in plasma.

The protein localises to the secreted. The protein resides in the extracellular space. It carries out the reaction Selective cleavage of Arg-|-Gly bonds in fibrinogen to form fibrin and release fibrinopeptides A and B.. Its activity is regulated as follows. Activity is promoted in the presence of negatively charged surfaces, such as polyphosphate and dextran sulfate. Inhibited by SERPINA5. Thrombin, which cleaves bonds after Arg and Lys, converts fibrinogen to fibrin and activates factors V, VII, VIII, XIII, and, in complex with thrombomodulin, protein C. Functions in blood homeostasis, inflammation and wound healing. Activates coagulation factor XI (F11); activation is promoted by the contact with negatively charged surfaces. Triggers the production of pro-inflammatory cytokines, such as MCP-1/CCL2 and IL8/CXCL8, in endothelial cells. The protein is Prothrombin (F2) of Bos taurus (Bovine).